We begin with the raw amino-acid sequence, 181 residues long: Oligoribonuclease (181 aa).

The 164-residue stretch at 8 to 171 (LIWIDLEMTG…DDIRESVAEL (164 aa)) folds into the Exonuclease domain. Tyr-129 is an active-site residue.

It belongs to the oligoribonuclease family.

It localises to the cytoplasm. Functionally, 3'-to-5' exoribonuclease specific for small oligoribonucleotides. This Photorhabdus laumondii subsp. laumondii (strain DSM 15139 / CIP 105565 / TT01) (Photorhabdus luminescens subsp. laumondii) protein is Oligoribonuclease.